A 231-amino-acid polypeptide reads, in one-letter code: Lipoprotein-releasing system ATP-binding protein LolD (231 aa).

The ABC transporter domain occupies 9 to 230 (FSLKDVGKEY…LRAGELYDQN (222 aa)). Residue 45 to 52 (GASGSGKS) coordinates ATP.

Belongs to the ABC transporter superfamily. Lipoprotein translocase (TC 3.A.1.125) family. As to quaternary structure, the complex is composed of two ATP-binding proteins (LolD) and two transmembrane proteins (LolC and LolE).

The protein resides in the cell inner membrane. Part of the ABC transporter complex LolCDE involved in the translocation of mature outer membrane-directed lipoproteins, from the inner membrane to the periplasmic chaperone, LolA. Responsible for the formation of the LolA-lipoprotein complex in an ATP-dependent manner. The polypeptide is Lipoprotein-releasing system ATP-binding protein LolD (Oleidesulfovibrio alaskensis (strain ATCC BAA-1058 / DSM 17464 / G20) (Desulfovibrio alaskensis)).